Consider the following 489-residue polypeptide: MKSIYKYLDTRLFLIGLLVLPFLAVVSCQNDDDDAIPVIHYIRVTDPAKADSTFTDVNPGTMIVVVGEHLGGTQKVYINDQEVSFNRNYVTSTSIILTVPNELELTGQNPELKGEIRIETEHGVAAYNMHVLSPAPYITRISATYPIKPGDQMTVIGGNFYEVQAVYLSTEQPAKDGTRPVDVQEITNYEVNNKYSQITLTAPANLLEEGYLVVECYTSSAVTEFKKNGPKPVVTAVSSTMPVVGSTVTITGQNFIEVSRVNINGEFDIPVGDITTSNTFDEISFVLPQAPTQSGHISVTAIGGTVESAEIFYPLENVILNYDGIGSHVWGDCSFVVADGSSAPYVSNGTCLGITGTVSASNYWWKQSYSNAQWVNTSIIPGNIPIDDLKLQFECFVKEVFTGPVFQIAMCENFDAALNGYVPVSSFTGKTETGKWMQCSVSLSSVVADATYQDFLNRNSTHIGVYATNPGSSQATIEVYFDNFRIVRK.

An N-terminal signal peptide occupies residues Met-1 to Ser-27. Residue Cys-28 is the site of N-palmitoyl cysteine attachment. Cys-28 carries S-diacylglycerol cysteine lipidation. 3 consecutive IPT/TIG domains span residues Val-57 to Leu-103, Pro-136 to Ala-204, and Pro-232 to Gly-304.

The protein localises to the cell outer membrane. Its pathway is glucan metabolism; xyloglucan degradation. In terms of biological role, polysaccharide-binding protein present at the surface of the cell. Probably mediates xyloglucan-binding before xyloglucan transport in the periplasm for degradation. The chain is IPT/TIG domain-containing protein BACOVA_02650 from Bacteroides ovatus (strain ATCC 8483 / DSM 1896 / JCM 5824 / BCRC 10623 / CCUG 4943 / NCTC 11153).